A 298-amino-acid chain; its full sequence is uncharacterized protein (298 aa).

This is an uncharacterized protein from Methanocaldococcus jannaschii (strain ATCC 43067 / DSM 2661 / JAL-1 / JCM 10045 / NBRC 100440) (Methanococcus jannaschii).